An 89-amino-acid polypeptide reads, in one-letter code: UPF0175 protein ssl1255 (89 aa).

This sequence belongs to the UPF0175 family.

In Synechocystis sp. (strain ATCC 27184 / PCC 6803 / Kazusa), this protein is UPF0175 protein ssl1255.